A 161-amino-acid chain; its full sequence is Urocortin-3 (161 aa).

The first 21 residues, 1–21 (MLMPVHFLLLLLLLLGGPRTG), serve as a signal peptide directing secretion. A propeptide spanning residues 22–118 (LPHKFYKAKP…QDTAKSPHRT (97 aa)) is cleaved from the precursor. The disordered stretch occupies residues 64–118 (SRDASSGEEEEGKEKKTFPISGARGGARGTRYRYVSQAQPRGKPRQDTAKSPHRT). Isoleucine 157 bears the Isoleucine amide mark.

It belongs to the sauvagine/corticotropin-releasing factor/urotensin I family. Binds with high affinity to CRF receptors 2-alpha and 2-beta.

The protein localises to the secreted. Functionally, suppresses food intake, delays gastric emptying and decreases heat-induced edema. Might represent an endogenous ligand for maintaining homeostasis after stress. In Homo sapiens (Human), this protein is Urocortin-3 (UCN3).